Reading from the N-terminus, the 83-residue chain is RNA-binding protein Hfq (83 aa).

Residues 9–68 form the Sm domain; the sequence is DPFLNALRKERIPVSIYLVNGIKLQGQVESFDQFVILLKNTVSQMVYKHAISTVVPSRAL.

Belongs to the Hfq family. In terms of assembly, homohexamer.

RNA chaperone that binds small regulatory RNA (sRNAs) and mRNAs to facilitate mRNA translational regulation in response to envelope stress, environmental stress and changes in metabolite concentrations. Also binds with high specificity to tRNAs. This chain is RNA-binding protein Hfq, found in Pseudoalteromonas atlantica (strain T6c / ATCC BAA-1087).